The chain runs to 130 residues: Small ribosomal subunit protein uS11c (130 aa).

Belongs to the universal ribosomal protein uS11 family. In terms of assembly, part of the 30S ribosomal subunit.

The protein localises to the plastid. Its subcellular location is the chloroplast. The sequence is that of Small ribosomal subunit protein uS11c from Angiopteris evecta (Mule's foot fern).